The primary structure comprises 265 residues: S-adenosylmethionine decarboxylase proenzyme (265 aa).

S114 serves as the catalytic Schiff-base intermediate with substrate; via pyruvic acid. The residue at position 114 (S114) is a Pyruvic acid (Ser); by autocatalysis. The active-site Proton acceptor; for processing activity is H119. Residue C142 is the Proton donor; for catalytic activity of the active site.

The protein belongs to the prokaryotic AdoMetDC family. Type 2 subfamily. Heterooctamer of four alpha and four beta chains arranged as a tetramer of alpha/beta heterodimers. Pyruvate is required as a cofactor. In terms of processing, is synthesized initially as an inactive proenzyme. Formation of the active enzyme involves a self-maturation process in which the active site pyruvoyl group is generated from an internal serine residue via an autocatalytic post-translational modification. Two non-identical subunits are generated from the proenzyme in this reaction, and the pyruvate is formed at the N-terminus of the alpha chain, which is derived from the carboxyl end of the proenzyme. The post-translation cleavage follows an unusual pathway, termed non-hydrolytic serinolysis, in which the side chain hydroxyl group of the serine supplies its oxygen atom to form the C-terminus of the beta chain, while the remainder of the serine residue undergoes an oxidative deamination to produce ammonia and the pyruvoyl group blocking the N-terminus of the alpha chain.

The enzyme catalyses S-adenosyl-L-methionine + H(+) = S-adenosyl 3-(methylsulfanyl)propylamine + CO2. The protein operates within amine and polyamine biosynthesis; S-adenosylmethioninamine biosynthesis; S-adenosylmethioninamine from S-adenosyl-L-methionine: step 1/1. Functionally, catalyzes the decarboxylation of S-adenosylmethionine to S-adenosylmethioninamine (dcAdoMet), the propylamine donor required for the synthesis of the polyamines spermine and spermidine from the diamine putrescine. This is S-adenosylmethionine decarboxylase proenzyme from Buchnera aphidicola subsp. Acyrthosiphon pisum (strain 5A).